Consider the following 354-residue polypeptide: Galactoside alpha-(1,2)-fucosyltransferase 2 (354 aa).

At 1 to 22 the chain is on the cytoplasmic side; that stretch reads MRFAPDYVLCPPTATRRLRATH. Residues 23–43 traverse the membrane as a helical; Signal-anchor for type II membrane protein segment; the sequence is PSVSTIYFLFTIFVVSTVFHC. Over 44–354 the chain is Lumenal; it reads HQRLALVPAP…NMGRALWSGL (311 aa). N197, N291, and N317 each carry an N-linked (GlcNAc...) asparagine glycan.

The protein belongs to the glycosyltransferase 11 family. Salivary and lactating mammary glands.

The protein localises to the golgi apparatus. The protein resides in the golgi stack membrane. The catalysed reaction is a beta-D-galactosyl-(1-&gt;3)-N-acetyl-beta-D-glucosaminyl derivative + GDP-beta-L-fucose = an alpha-L-Fuc-(1-&gt;2)-beta-D-Gal-(1-&gt;3)-beta-D-GlcNAc derivative + GDP + H(+). The enzyme catalyses a beta-D-galactosyl-(1-&gt;4)-N-acetyl-beta-D-glucosaminyl derivative + GDP-beta-L-fucose = an alpha-L-Fuc-(1-&gt;2)-beta-D-Gal-(1-&gt;4)-beta-D-GlcNAc derivative + GDP + H(+). It catalyses the reaction a neolactoside nLc4Cer + GDP-beta-L-fucose = a neolactoside IV(2)-alpha-Fuc-nLc4Cer + GDP + H(+). It carries out the reaction a neolactoside nLc4Cer(d18:1(4E)) + GDP-beta-L-fucose = a neolactoside IV(2)-alpha-Fuc-nLc4Cer(d18:1(4E)) + GDP + H(+). The catalysed reaction is a ganglioside GM1 + GDP-beta-L-fucose = a ganglioside Fuc-GM1 + GDP + H(+). The enzyme catalyses a ganglioside GA1 + GDP-beta-L-fucose = a ganglioside Fuc-GA1 + GDP + H(+). It catalyses the reaction Lc4Cer + GDP-beta-L-fucose = alpha-L-fucosyl-(1-&gt;2)-beta-D-galactosyl-(1-&gt;3)-N-acetyl-beta-D-glucosaminyl-(1-&gt;3)-beta-D-galactosyl-(1-&gt;4)-beta-D-glucosyl-(1&lt;-&gt;1')-ceramide + GDP + H(+). It carries out the reaction a beta-D-Gal-(1-&gt;3)-beta-D-GlcNAc-(1-&gt;3)-beta-D-Gal-(1-&gt;4)-beta-D-Glc-(1&lt;-&gt;1')-Cer(d18:1(4E)) + GDP-beta-L-fucose = alpha-L-fucosyl-(1-&gt;2)- beta-D-galactosyl-(1-&gt;3)-N-acetyl-beta-D-glucosaminyl-(1-&gt;3)-beta-D-galactosyl-(1-&gt;4)-beta-D-glucosyl-(1&lt;-&gt;1')-N-acylsphing-4-enine + GDP + H(+). The catalysed reaction is a ganglioside GD1b + GDP-beta-L-fucose = a ganglioside Fuc-GD1b + GDP + H(+). The enzyme catalyses a ganglioside GM1 (d18:1(4E)) + GDP-beta-L-fucose = a ganglioside Fuc-GM1 (d18:1(4E)) + GDP + H(+). It catalyses the reaction a globoside GalGb4Cer (d18:1(4E)) + GDP-beta-L-fucose = a globoside Globo-H (d18:1(4E)) + GDP + H(+). It carries out the reaction a lactoside III(4)-a-Fuc-Lc4Cer + GDP-beta-L-fucose = a lactoside IV(2),III(4)-a-[Fuc]2-Lc4Cer + GDP + H(+). The catalysed reaction is beta-D-galactosyl-(1-&gt;3)-N-acetyl-D-galactosamine + GDP-beta-L-fucose = alpha-L-fucosyl-(1-&gt;2)-beta-D-galactosyl-(1-&gt;3)-N-acetyl-D-galactosamine + GDP + H(+). The protein operates within protein modification; protein glycosylation. Functionally, catalyzes the transfer of L-fucose, from a guanosine diphosphate-beta-L-fucose, to the terminal galactose on both O- and N-linked glycans chains of cell surface glycoproteins and glycolipids and the resulting epitope regulates several processes such as cell-cell interaction including host-microbe interaction, cell surface expression and cell proliferation. Preferentially fucosylates gangliosides GA1 and GM1 in the antrum, cecum and colon and in the female reproductive organs. Fucosylated host glycoproteins or glycolipids mediate interaction with intestinal microbiota influencing its composition. Creates a soluble precursor oligosaccharide FuC-alpha ((1,2)Galbeta-) called the H antigen which is an essential substrate for the final step in the soluble ABO blood group antigen synthesis pathway. This Oryctolagus cuniculus (Rabbit) protein is Galactoside alpha-(1,2)-fucosyltransferase 2.